Here is a 100-residue protein sequence, read N- to C-terminus: uncharacterized protein (100 aa).

Helical transmembrane passes span 7–28 (TLIG…LLSL), 38–60 (AQLS…ILII), and 65–87 (LSAL…ANGV).

Its subcellular location is the cell membrane. This is an uncharacterized protein from Archaeoglobus fulgidus (strain ATCC 49558 / DSM 4304 / JCM 9628 / NBRC 100126 / VC-16).